Reading from the N-terminus, the 116-residue chain is Putative antiporter subunit mnhC2 (116 aa).

3 helical membrane passes run 3-23 (LILL…ILSL), 28-48 (IVIG…SMGH), and 72-92 (AIVL…LVLV).

This sequence belongs to the CPA3 antiporters (TC 2.A.63) subunit C family. As to quaternary structure, may form a heterooligomeric complex that consists of seven subunits: mnhA2, mnhB2, mnhC2, mnhD2, mnhE2, mnhF2 and mnhG2.

The protein resides in the cell membrane. This chain is Putative antiporter subunit mnhC2 (mnhC2), found in Staphylococcus haemolyticus (strain JCSC1435).